Consider the following 221-residue polypeptide: Serine/arginine-rich splicing factor 9 (221 aa).

RRM domains follow at residues 14–89 and 111–187; these read GRIY…FPRT and FRVL…PERS. K36 participates in a covalent cross-link: Glycyl lysine isopeptide (Lys-Gly) (interchain with G-Cter in SUMO2). The interval 188-200 is interaction with SAFB1; sequence TSYGYSRSRSGSR. The residue at position 189 (S189) is a Phosphoserine. Residues 189–198 show a composition bias toward low complexity; that stretch reads SYGYSRSRSG. Residues 189–221 form a disordered region; that stretch reads SYGYSRSRSGSRGRDSPYQSRGSPHYFSPFRPY. Phosphotyrosine is present on Y192. S193, S195, S204, S208, and S211 each carry phosphoserine. Y214 is modified (phosphotyrosine). A Phosphoserine modification is found at S216.

The protein belongs to the splicing factor SR family. As to quaternary structure, interacts with KHDRBS3. Interacts with HABP4. Interacts with NOL3/ARC/NOP30. Interacts with NSEP1/YB-1/YB1. Interacts with SAFB/SAFB1. Interacts with SRSF6/SFRS6. Interacts with TRA2B/SFRS10. Interacts with C1QBP. May also interact with DUSP11/PIR1. In terms of processing, extensively phosphorylated on serine residues in the RS domain. Expressed at high levels in the heart, kidney, pancreas and placenta, and at lower levels in the brain, liver, lung and skeletal muscle.

It is found in the nucleus. In terms of biological role, plays a role in constitutive splicing and can modulate the selection of alternative splice sites. Represses the splicing of MAPT/Tau exon 10. In Homo sapiens (Human), this protein is Serine/arginine-rich splicing factor 9 (SRSF9).